The sequence spans 77 residues: Translation initiation factor IF-1, chloroplastic (77 aa).

One can recognise an S1-like domain in the interval 1–71 (MKEQKWIHEG…TKGRIIYRIR (71 aa)).

This sequence belongs to the IF-1 family. In terms of assembly, component of the 30S ribosomal translation pre-initiation complex which assembles on the 30S ribosome in the order IF-2 and IF-3, IF-1 and N-formylmethionyl-tRNA(fMet); mRNA recruitment can occur at any time during PIC assembly.

Its subcellular location is the plastid. The protein localises to the chloroplast. Its function is as follows. One of the essential components for the initiation of protein synthesis. Stabilizes the binding of IF-2 and IF-3 on the 30S subunit to which N-formylmethionyl-tRNA(fMet) subsequently binds. Helps modulate mRNA selection, yielding the 30S pre-initiation complex (PIC). Upon addition of the 50S ribosomal subunit IF-1, IF-2 and IF-3 are released leaving the mature 70S translation initiation complex. The protein is Translation initiation factor IF-1, chloroplastic of Vitis vinifera (Grape).